Reading from the N-terminus, the 314-residue chain is DNA topoisomerase 1B (314 aa).

The Topo IB-type catalytic domain occupies 77-314 (VQNRNAKRDR…VDHVKSSTDG (238 aa)). Residue Tyr274 is the O-(3'-phospho-DNA)-tyrosine intermediate of the active site.

Belongs to the type IB topoisomerase family.

The catalysed reaction is ATP-independent breakage of single-stranded DNA, followed by passage and rejoining.. Functionally, releases the supercoiling and torsional tension of DNA introduced during the DNA replication and transcription by transiently cleaving and rejoining one strand of the DNA duplex. Introduces a single-strand break via transesterification at the specific target site 5'-[CT]CCTTp site in duplex DNA. The scissile phosphodiester is attacked by the catalytic tyrosine of the enzyme, resulting in the formation of a DNA-(3'-phosphotyrosyl)-enzyme intermediate and the expulsion of a 5'-OH DNA strand. The free DNA strand then undergoes passage around the unbroken strand thus removing DNA supercoils. Finally, in the religation step, the DNA 5'-OH attacks the covalent intermediate to expel the active-site tyrosine and restore the DNA phosphodiester backbone. The chain is DNA topoisomerase 1B (TOP1) from Vaccinia virus (strain Ankara) (VACV).